Reading from the N-terminus, the 504-residue chain is MEHGFVALVGAGPGDKGLITIRGAELLSQADVVVYDRLVSQEIIKMIPTTAEKIDVGKENKFHPVKQEEINHILLEKSLEGKKVIRLKGGDPFVFGRGGEELELLYENNIPFEVVPGVTSAVAALCYGGIPATHRDFCSSLHIITGHAREGGQLSIPFHELKELNGTIVFLMGDSSLSYLMNGLINAGMEKDMPAAIVENGTRPNQRKLVATVGTLEQKALEMEIKSPAIIAVGKVCSLSEKFSWFMKKPLFGTKILVTRPKESSGTLVEKLRQLGAEPVEYPCIEVVPIPQNEKLYHACENIREYGWILLTSKNGIQIFFDYLNSKGLDARVLANTKIGTVGSQTAKALKEVGLISDFTPEIFDGRHLALGIAERVGENEKVLICDAAIASDDIVNILRSNNIKFDRVPLYNTNYINENSNKVKKSIVHGELKYITFTSASTVEGFIASMKDIPLESLTAVCIGNKTAEAAKKYNLRYVVAEKSTIDSMIDKLLEIGGGNIYD.

Positions methionine 1 to lysine 248 are uroporphyrinogen-III C-methyltransferase. The interval lysine 249–aspartate 504 is uroporphyrinogen-III synthase.

This sequence in the N-terminal section; belongs to the precorrin methyltransferase family. The protein in the C-terminal section; belongs to the uroporphyrinogen-III synthase family.

It catalyses the reaction uroporphyrinogen III + 2 S-adenosyl-L-methionine = precorrin-2 + 2 S-adenosyl-L-homocysteine + H(+). The enzyme catalyses hydroxymethylbilane = uroporphyrinogen III + H2O. Its pathway is cofactor biosynthesis; adenosylcobalamin biosynthesis; precorrin-2 from uroporphyrinogen III: step 1/1. The protein operates within porphyrin-containing compound metabolism; siroheme biosynthesis; precorrin-2 from uroporphyrinogen III: step 1/1. May catalyze sequential reactions to synthesize uroporphyrinogen III from hydroxymethylbilane (HMB) and then precorrin-2, which are intermediate compounds in both vitamin B12 and siroheme biosyntheses. This Ruminiclostridium josui (Clostridium josui) protein is Porphyrin biosynthesis protein HemD (hemD).